The following is a 442-amino-acid chain: UDP-N-acetylglucosamine 1-carboxyvinyltransferase (442 aa).

22-23 lines the phosphoenolpyruvate pocket; that stretch reads KN. Arg-94 provides a ligand contact to UDP-N-acetyl-alpha-D-glucosamine. The Proton donor role is filled by Asp-119. The UDP-N-acetyl-alpha-D-glucosamine site is built by Asp-309 and Val-331.

The protein belongs to the EPSP synthase family. MurA subfamily.

Its subcellular location is the cytoplasm. It carries out the reaction phosphoenolpyruvate + UDP-N-acetyl-alpha-D-glucosamine = UDP-N-acetyl-3-O-(1-carboxyvinyl)-alpha-D-glucosamine + phosphate. It participates in cell wall biogenesis; peptidoglycan biosynthesis. Its function is as follows. Cell wall formation. Adds enolpyruvyl to UDP-N-acetylglucosamine. In Chlamydia muridarum (strain MoPn / Nigg), this protein is UDP-N-acetylglucosamine 1-carboxyvinyltransferase.